The following is a 281-amino-acid chain: Probable short-chain type dehydrogenase/reductase blr2146 (281 aa).

Val10 to Val34 contacts NAD(+). Substrate is bound at residue Ser146. Catalysis depends on Tyr159, which acts as the Proton acceptor. A disordered region spans residues Gly261–Cys281.

This sequence belongs to the short-chain dehydrogenases/reductases (SDR) family.

This chain is Probable short-chain type dehydrogenase/reductase blr2146, found in Bradyrhizobium diazoefficiens (strain JCM 10833 / BCRC 13528 / IAM 13628 / NBRC 14792 / USDA 110).